A 458-amino-acid chain; its full sequence is Phosphoglucosamine mutase (458 aa).

Ser100 functions as the Phosphoserine intermediate in the catalytic mechanism. Positions 100, 254, 256, and 258 each coordinate Mg(2+). Ser100 carries the phosphoserine modification.

The protein belongs to the phosphohexose mutase family. It depends on Mg(2+) as a cofactor. Activated by phosphorylation.

It carries out the reaction alpha-D-glucosamine 1-phosphate = D-glucosamine 6-phosphate. In terms of biological role, catalyzes the conversion of glucosamine-6-phosphate to glucosamine-1-phosphate. The sequence is that of Phosphoglucosamine mutase from Nocardia farcinica (strain IFM 10152).